The following is a 561-amino-acid chain: Arginine--tRNA ligase (561 aa).

The 'HIGH' region signature appears at 129-139 (ANPTGPLHVGH).

This sequence belongs to the class-I aminoacyl-tRNA synthetase family. Monomer.

It is found in the cytoplasm. The enzyme catalyses tRNA(Arg) + L-arginine + ATP = L-arginyl-tRNA(Arg) + AMP + diphosphate. This is Arginine--tRNA ligase from Polaromonas sp. (strain JS666 / ATCC BAA-500).